The chain runs to 547 residues: Glucose-6-phosphate isomerase 2 (547 aa).

Glutamate 351 serves as the catalytic Proton donor. Active-site residues include histidine 382 and lysine 508.

This sequence belongs to the GPI family.

Its subcellular location is the cytoplasm. The enzyme catalyses alpha-D-glucose 6-phosphate = beta-D-fructose 6-phosphate. It participates in carbohydrate biosynthesis; gluconeogenesis. It functions in the pathway carbohydrate degradation; glycolysis; D-glyceraldehyde 3-phosphate and glycerone phosphate from D-glucose: step 2/4. Functionally, catalyzes the reversible isomerization of glucose-6-phosphate to fructose-6-phosphate. In Neisseria meningitidis serogroup A / serotype 4A (strain DSM 15465 / Z2491), this protein is Glucose-6-phosphate isomerase 2.